Reading from the N-terminus, the 1401-residue chain is DNA polymerase III PolC-type (1401 aa).

Residues 388-543 (FVVFDIETTG…EDAKATAEIF (156 aa)) enclose the Exonuclease domain.

Belongs to the DNA polymerase type-C family. PolC subfamily.

Its subcellular location is the cytoplasm. It catalyses the reaction DNA(n) + a 2'-deoxyribonucleoside 5'-triphosphate = DNA(n+1) + diphosphate. Functionally, required for replicative DNA synthesis. This DNA polymerase also exhibits 3' to 5' exonuclease activity. The chain is DNA polymerase III PolC-type from Caldanaerobacter subterraneus subsp. tengcongensis (strain DSM 15242 / JCM 11007 / NBRC 100824 / MB4) (Thermoanaerobacter tengcongensis).